Here is a 215-residue protein sequence, read N- to C-terminus: Octanoyltransferase (215 aa).

The BPL/LPL catalytic domain maps to 31 to 206; that stretch reads PESQDEVWLV…QLVRHLDYAE (176 aa). Residues 70-77, 137-139, and 150-152 each bind substrate; these read RGGQVTYH, SLG, and GLA. The Acyl-thioester intermediate role is filled by Cys-168.

This sequence belongs to the LipB family.

The protein localises to the cytoplasm. It carries out the reaction octanoyl-[ACP] + L-lysyl-[protein] = N(6)-octanoyl-L-lysyl-[protein] + holo-[ACP] + H(+). Its pathway is protein modification; protein lipoylation via endogenous pathway; protein N(6)-(lipoyl)lysine from octanoyl-[acyl-carrier-protein]: step 1/2. Functionally, catalyzes the transfer of endogenously produced octanoic acid from octanoyl-acyl-carrier-protein onto the lipoyl domains of lipoate-dependent enzymes. Lipoyl-ACP can also act as a substrate although octanoyl-ACP is likely to be the physiological substrate. This is Octanoyltransferase from Pseudomonas entomophila (strain L48).